We begin with the raw amino-acid sequence, 185 residues long: Inner membrane-spanning protein YciB (185 aa).

5 helical membrane passes run 19–39, 53–73, 76–96, 118–138, and 149–169; these read LGGVREAAIVLVVATILQIVI, IMASAVVFFGLLTAYFNEIRY, WKVTIINGLFAIVLLIAQFQF, TLNFGWAIFFIICMLVNIYIS, and FKSFGIIGMTVIATIISGVYI.

It belongs to the YciB family.

Its subcellular location is the cell inner membrane. Its function is as follows. Plays a role in cell envelope biogenesis, maintenance of cell envelope integrity and membrane homeostasis. This is Inner membrane-spanning protein YciB from Haemophilus influenzae (strain PittEE).